Reading from the N-terminus, the 77-residue chain is Immune protein Tis1 (77 aa).

Immunity protein that plays a role in preventing early activation of toxin Tas1. The sequence is that of Immune protein Tis1 (tis1) from Pseudomonas aeruginosa (strain UCBPP-PA14).